Here is a 246-residue protein sequence, read N- to C-terminus: Probable septum site-determining protein MinC (246 aa).

The protein belongs to the MinC family. Interacts with MinD and FtsZ.

Functionally, cell division inhibitor that blocks the formation of polar Z ring septums. Rapidly oscillates between the poles of the cell to destabilize FtsZ filaments that have formed before they mature into polar Z rings. Prevents FtsZ polymerization. In Lachnospira eligens (strain ATCC 27750 / DSM 3376 / VPI C15-48 / C15-B4) (Eubacterium eligens), this protein is Probable septum site-determining protein MinC.